Reading from the N-terminus, the 1328-residue chain is DNA-directed RNA polymerase subunit beta (1328 aa).

The protein belongs to the RNA polymerase beta chain family. In terms of assembly, the RNAP catalytic core consists of 2 alpha, 1 beta, 1 beta' and 1 omega subunit. When a sigma factor is associated with the core the holoenzyme is formed, which can initiate transcription.

The catalysed reaction is RNA(n) + a ribonucleoside 5'-triphosphate = RNA(n+1) + diphosphate. Its function is as follows. DNA-dependent RNA polymerase catalyzes the transcription of DNA into RNA using the four ribonucleoside triphosphates as substrates. The sequence is that of DNA-directed RNA polymerase subunit beta from Karelsulcia muelleri (strain GWSS) (Sulcia muelleri).